Here is a 213-residue protein sequence, read N- to C-terminus: Penicillin-binding protein activator LpoB (213 aa).

An N-terminal signal peptide occupies residues 1 to 19; the sequence is MMKMNRYALVAALAIFLSG. C20 carries N-palmitoyl cysteine lipidation. C20 carries S-diacylglycerol cysteine lipidation. The tract at residues 26 to 71 is disordered; sequence PAPVDEVKPAPEQPAEPQQPVPVVPSVPTIPQQPGPIEHEDQTAQP. Residues 36–50 show a composition bias toward pro residues; the sequence is PEQPAEPQQPVPVVP.

Belongs to the LpoB family. As to quaternary structure, interacts with PBP1b.

It localises to the cell outer membrane. Its function is as follows. Regulator of peptidoglycan synthesis that is essential for the function of penicillin-binding protein 1B (PBP1b). The protein is Penicillin-binding protein activator LpoB of Citrobacter koseri (strain ATCC BAA-895 / CDC 4225-83 / SGSC4696).